A 571-amino-acid chain; its full sequence is Chondroitin sulfate proteoglycan 5 (571 aa).

The signal sequence occupies residues 1–30 (MGRAGGGGPGWGPPPVLLLLGVTLVLTAGA). At 31–428 (VPAREAGSAI…SIITDFQVMC (398 aa)) the chain is on the extracellular side. Ser38 carries O-linked (Xyl...) (chondroitin sulfate) serine glycosylation. An N-linked (GlcNAc...) asparagine glycan is attached at Asn57. A disordered region spans residues 57–91 (NDTREEAGLPAAGEDETSWTERGSELAAVGPGVGP). An O-linked (GalNAc...) threonine glycan is attached at Thr76. An O-linked (Xyl...) (chondroitin sulfate) serine glycan is attached at Ser123. O-linked (GalNAc...) threonine glycosylation occurs at Thr132. Disordered regions lie at residues 137 to 169 (DEAL…KPSL), 186 to 254 (GGST…TPSW), and 279 to 357 (DDLE…DLAT). Ser143 carries an O-linked (GalNAc...) serine glycan. O-linked (GalNAc...) threonine glycosylation is found at Thr144 and Thr153. Residues Ser156 and Ser160 are each glycosylated (O-linked (GalNAc...) serine). O-linked (GalNAc...) threonine glycans are attached at residues Thr162 and Thr198. Acidic residues predominate over residues 214-223 (IDIDYFEGLD). O-linked (GalNAc...) threonine glycosylation is present at Thr240. An interaction with TNC and TNR region spans residues 270-306 (DFYPTTSFYDDLEEEEEEEEDKDAVGGGDLEDESDLL). Over residues 279 to 291 (DDLEEEEEEEEDK) the composition is skewed to acidic residues. O-linked (GalNAc...) threonine glycans are attached at residues Thr318 and Thr322. Asn372 carries an N-linked (GlcNAc...) asparagine glycan. The 43-residue stretch at 376–418 (RSVCDLFPSYCHNGGQCYLVENIGAFCRCNTQDYIWHKGMRCE) folds into the EGF-like domain. Cystine bridges form between Cys379/Cys392, Cys386/Cys402, and Cys404/Cys417. A helical membrane pass occupies residues 429–449 (VAVGSAALVLLLLFMMTVFFA). Residues 447–465 (FFAKKLYLLKTENTKLRRT) form an interaction with GOPC region. Over 450–571 (KKLYLLKTEN…EVNCLQNNLT (122 aa)) the chain is Cytoplasmic. Ser472, Ser480, Ser488, and Ser548 each carry phosphoserine. The tract at residues 538-563 (EESFNIQNSMSPKLEGGKGDQDDLEV) is disordered.

As to quaternary structure, interacts with ERBB3 and GOPC. Binds TNR and probably TNC. Interacts with MDK; this interaction is independent of the presence of chondroitin sulfate chains and promotes elongation of oligodendroglial precursor-like cells. Post-translationally, N-glycosylated. O-glycosylated; contains chondroitin sulfate glycans. Part-time proteoglycan, expressed in part as a proteoglycan exhibiting chondroitin sulfate glycans and in part as a non-proteoglycan form. The relative amount of both forms depends on tissues and tissue maturation. In terms of processing, phosphorylated; in intracellular and extracellular parts. Expressed in cerebral cortex and cerebellum. Expressed in retina (at protein level).

Its subcellular location is the cell membrane. It is found in the synaptic cell membrane. The protein resides in the endoplasmic reticulum membrane. It localises to the golgi apparatus membrane. The protein localises to the cell surface. Its subcellular location is the secreted. May function as a growth and differentiation factor involved in neuritogenesis. May induce ERBB3 activation. The protein is Chondroitin sulfate proteoglycan 5 (Cspg5) of Rattus norvegicus (Rat).